The following is a 747-amino-acid chain: Tripartite terminase subunit 3 (747 aa).

The short motif at 194 to 198 (KRAKV) is the Nuclear localization signal element. The Walker A motif motif lies at 267–274 (VPRRHGKT). A Walker B motif motif is present at residues 361–366 (LLFVDE). The For ATPase activity role is filled by E366. Residues D521, E593, and D722 each act as for nuclease activity in the active site.

Belongs to the herpesviridae TRM3 protein family. Interacts with the terminase subunits TRM1 and TRM2. Interacts with portal protein.

It is found in the host nucleus. In terms of biological role, component of the molecular motor that translocates viral genomic DNA in empty capsid during DNA packaging. Forms a tripartite terminase complex together with TRM1 and TRM2 in the host cytoplasm. Once the complex reaches the host nucleus, it interacts with the capsid portal vertex. This portal forms a ring in which genomic DNA is translocated into the capsid. TRM3 carries an RNase H-like nuclease activity that plays an important role for the cleavage of concatemeric viral DNA into unit length genomes. This chain is Tripartite terminase subunit 3, found in Homo sapiens (Human).